The sequence spans 414 residues: Mannan endo-1,4-beta-mannosidase 3 (414 aa).

The signal sequence occupies residues 1–19; it reads MKCLCFVVLLAILIAQNSS. Asn-17 and Asn-75 each carry an N-linked (GlcNAc...) asparagine glycan. Trp-87 contributes to the substrate binding site. N-linked (GlcNAc...) asparagine glycosylation is found at Asn-133 and Asn-153. Asn-202 contributes to the substrate binding site. Glu-203 acts as the Proton donor in catalysis. Tyr-283 is a substrate binding site. Catalysis depends on Glu-323, which acts as the Nucleophile. N-linked (GlcNAc...) asparagine glycosylation occurs at Asn-343. Trp-365 contributes to the substrate binding site. A glycan (N-linked (GlcNAc...) asparagine) is linked at Asn-386.

This sequence belongs to the glycosyl hydrolase 5 (cellulase A) family. Expressed in leaves, flowers, siliques and seeds.

The protein localises to the secreted. The enzyme catalyses Random hydrolysis of (1-&gt;4)-beta-D-mannosidic linkages in mannans, galactomannans and glucomannans.. In Arabidopsis thaliana (Mouse-ear cress), this protein is Mannan endo-1,4-beta-mannosidase 3 (MAN3).